Here is a 443-residue protein sequence, read N- to C-terminus: ATP-dependent protease ATPase subunit HslU (443 aa).

Residues Ile-18, 60–65, Asp-256, Glu-321, and Arg-393 each bind ATP; that span reads GVGKTE.

This sequence belongs to the ClpX chaperone family. HslU subfamily. As to quaternary structure, a double ring-shaped homohexamer of HslV is capped on each side by a ring-shaped HslU homohexamer. The assembly of the HslU/HslV complex is dependent on binding of ATP.

The protein localises to the cytoplasm. Functionally, ATPase subunit of a proteasome-like degradation complex; this subunit has chaperone activity. The binding of ATP and its subsequent hydrolysis by HslU are essential for unfolding of protein substrates subsequently hydrolyzed by HslV. HslU recognizes the N-terminal part of its protein substrates and unfolds these before they are guided to HslV for hydrolysis. In Shigella boydii serotype 18 (strain CDC 3083-94 / BS512), this protein is ATP-dependent protease ATPase subunit HslU.